Here is a 142-residue protein sequence, read N- to C-terminus: Dromaiocalcin-2 (142 aa).

Cystine bridges form between cysteine 6–cysteine 17, cysteine 34–cysteine 138, and cysteine 113–cysteine 130. The C-type lectin domain occupies 13–139 (FDGRCYGFFP…CSDRKPFICA (127 aa)). Phosphoserine occurs at positions 62 and 68.

Post-translationally, a minor form with some unmodified Ser-68 and partial phosphorylation of Ser-66 may also occur.

Its subcellular location is the secreted. It is found in the extracellular space. It localises to the extracellular matrix. The sequence is that of Dromaiocalcin-2 from Dromaius novaehollandiae (Emu).